Reading from the N-terminus, the 606-residue chain is Radial spoke head protein 3 homolog (606 aa).

Residues 1-103 (MARSEARRQA…NSPEAPPLDG (103 aa)) are disordered. The segment covering 15-46 (PRAVPEERALRERRQPRPRREPLESGAGDHRR) has biased composition (basic and acidic residues). At threonine 331 the chain carries Phosphothreonine; by MAPK1. Positions 393–429 (AYEELRNIELAEVQRLEEQERRHREEKERRKQQQWQV) form a coiled coil. The segment at 520-606 (EGRHASVRPE…KSSKREELSQ (87 aa)) is disordered. Over residues 547-556 (SQDQGASQAQ) the composition is skewed to polar residues. Positions 572-604 (ARYAERVSSQERRLAEENDELTEMRKSSKREEL) form a coiled coil. Residues 573-606 (RYAERVSSQERRLAEENDELTEMRKSSKREELSQ) are compositionally biased toward basic and acidic residues.

This sequence belongs to the flagellar radial spoke RSP3 family. Component of the axonemal radial spoke 1 (RS1) and 2 (RS2) complexes, at least composed of spoke head proteins RSPH1, RSPH3, RSPH9 and the cilia-specific component RSPH4A or sperm-specific component RSPH6A, spoke stalk proteins RSPH14, DNAJB13, DYDC1, ROPN1L and NME5, and the RS1 complex-specific anchor protein IQUB. Interacts with IQUB. Interacts with phosphorylated MAPK1. Interacts with MEK1. Interacts with PKA regulatory subunits PRKAR1A and PRKAR1B. Interacts with RSPH1. Interacts with RSPH4A. Interacts with RSPH6A. Interacts with RSPH9. Interacts with LRRC23.

It localises to the cytoplasm. It is found in the cytoskeleton. Its subcellular location is the cilium axoneme. The protein resides in the flagellum axoneme. In terms of biological role, functions as part of axonemal radial spoke complexes that play an important part in the motility of sperm and cilia. Functions as a protein kinase A-anchoring protein that scaffolds the cAMP-dependent protein kinase holoenzyme. May serve as a point of convergence for MAPK and PKA signaling in cilia. This is Radial spoke head protein 3 homolog (RSPH3) from Bos taurus (Bovine).